A 1707-amino-acid polypeptide reads, in one-letter code: RNA replication protein (1707 aa).

The Alphavirus-like MT domain occupies 66–242; the sequence is SVHSFQGHAH…AYTQPVNPWL (177 aa). In terms of domain architecture, Fe2OG dioxygenase spans 645–738; it reads SYDHCLIQRY…RCSITLRNKT (94 aa). Fe cation contacts are provided by His-663, Asp-665, and His-720. Arg-729 provides a ligand contact to 2-oxoglutarate. The 160-residue stretch at 892–1051 folds into the (+)RNA virus helicase ATP-binding domain; sequence QSFYNGNTGV…NRVRGKLPYL (160 aa). The (+)RNA virus helicase C-terminal domain maps to 1052 to 1182; that stretch reads CYSHRLPRNC…ETYRRSEIVA (131 aa). Residues 1469 to 1580 form the RdRp catalytic domain; it reads MMGTDSDYEA…RVKKDYEATL (112 aa).

This sequence belongs to the potexviruses/carlaviruses RNA replication protein family. Fe(2+) is required as a cofactor.

It carries out the reaction RNA(n) + a ribonucleoside 5'-triphosphate = RNA(n+1) + diphosphate. The catalysed reaction is ATP + H2O = ADP + phosphate + H(+). RNA replication. The central part of this protein possibly functions as an ATP-binding helicase. The polypeptide is RNA replication protein (Grapevine virus A (isolate Is 151) (GVA)).